The sequence spans 1287 residues: MHPDLGPLCTLLYVTLTILCSSVSSDLAPYFTSEPLSAVQKLGGPVVLHCSAQPVTTRISWLHNGKTLDGNLEHVKIHQGTLTILSLNSSLLGYYQCLANNSIGAIVSGPATVSVAVLGDFGSSTKHVITAEEKSAGFIGCRVPESNPKAEVRYKIRGKWLEHSTENYLILPSGNLQILNVSLEDKGSYKCAAYNPVTHQLKVEPIGRKLLVSRPSSDDVHILHPTHSQALAVLSRSPVTLECVVSGVPAPQVYWLKDGQDIAPGSNWRRLYSHLATDSVDPADSGNYSCMAGNKSGDVKYVTYMVNVLEHASISKGLQDQIVSLGATVHFTCDVHGNPAPNCTWFHNAQPIHPSARHLTAGNGLKISGVTVEDVGMYQCVADNGIGFMHSTGRLEIENDGGFKPVIITAPVSAKVADGDFVTLSCNASGLPVPVIRWYDSHGLITSHPSQVLRSKSRKSQLSRPEGLNLEPVYFVLSQAGASSLHIQAVTQEHAGKYICEAANEHGTTQAEASLMVVPFETNTKAETVTLPDAAQNDDRSKRDGSETGLLSSFPVKVHPSAVESAPEKNASGISVPDAPIILSPPQTHTPDTYNLVWRAGKDGGLPINAYFVKYRKLDDGVGMLGSWHTVRVPGSENELHLAELEPSSLYEVLMVARSAAGEGQPAMLTFRTSKEKTASSKNTQASSPPVGIPKYPVVSEAANNNFGVVLTDSSRHSGVPEAPDRPTISTASETSVYVTWIPRANGGSPITAFKVEYKRMRTSNWLVAAEDIPPSKLSVEVRSLEPGSTYKFRVIAINHYGESFRSSASRPYQVVGFPNRFSSRPITGPHIAYTEAVSDTQIMLKWTYIPSSNNNTPIQGFYIYYRPTDSDNDSDYKRDVVEGSKQWHMIGHLQPETSYDIKMQCFNEGGESEFSNVMICETKVKRVPGASEYPVKDLSTPPNSLGSGGNVGPATSPARSSDMLYLIVGCVLGVMVLILMVFIAMCLWKNRQQNTIQKYDPPGYLYQGSDMNGQMVDYTTLSGASQINGNVHGGFLTNGGLSSGYSHLHHKVPNAVNGIVNGSLNGGLYSGHSNSLTRTHVDFEHPHHLVNGGGMYTAVPQIDPLECVNCRNCRNNNRCFTKTNSTFSSSPPPVVPVVAPYPQDGLEMKPLSHVKVPVCLTSAVPDCGQLPEESVKDNVEPVPTQRTCCQDIVNDVSSDGSEDPAEFSRGQEGMINLRIPDHLQLAKSCVWEGDSCAHSETEINIVSWNALILPPVPEGCAEKTMWSPPGIPLDSPTEVLQQPRET.

Positions 1–25 (MHPDLGPLCTLLYVTLTILCSSVSS) are cleaved as a signal peptide. Residues 26 to 963 (DLAPYFTSEP…PATSPARSSD (938 aa)) are Extracellular-facing. Ig-like C2-type domains are found at residues 29-114 (PYFT…ATVS), 120-204 (DFGS…LKVE), 225-303 (PTHS…KYVT), 310-396 (EHAS…GRLE), and 405-516 (PVII…ASLM). An intrachain disulfide couples Cys-50 to Cys-97. 7 N-linked (GlcNAc...) asparagine glycosylation sites follow: Asn-88, Asn-100, Asn-180, Asn-287, Asn-294, Asn-342, and Asn-427. 2 disulfide bridges follow: Cys-141-Cys-191 and Cys-243-Cys-290. 2 disulfide bridges follow: Cys-333–Cys-380 and Cys-426–Cys-500. Residues 531–553 (LPDAAQNDDRSKRDGSETGLLSS) form a disordered region. Basic and acidic residues predominate over residues 537-546 (NDDRSKRDGS). An N-linked (GlcNAc...) asparagine glycan is attached at Asn-570. Fibronectin type-III domains are found at residues 579–677 (APII…SKEK), 723–821 (APDR…FPNR), and 826–926 (PITG…TKVK). Asn-873 is a glycosylation site (N-linked (GlcNAc...) asparagine). The disordered stretch occupies residues 933 to 955 (EYPVKDLSTPPNSLGSGGNVGPA). Residues 964 to 984 (MLYLIVGCVLGVMVLILMVFI) form a helical membrane-spanning segment. Over 985–1287 (AMCLWKNRQQ…TEVLQQPRET (303 aa)) the chain is Cytoplasmic. Positions 1268–1287 (SPPGIPLDSPTEVLQQPRET) are disordered.

Part of a complex that contains BOC, CDON, NEO1, cadherins and CTNNB1. Interacts with NTN3. Interacts with PTCH1. Interacts with GAS1. Interacts with DHH, IHH and SHH. In terms of processing, N-glycosylated.

The protein localises to the cell membrane. Its function is as follows. Component of a cell-surface receptor complex that mediates cell-cell interactions between muscle precursor cells. Promotes differentiation of myogenic cells. The chain is Cell adhesion molecule-related/down-regulated by oncogenes (CDON) from Homo sapiens (Human).